Here is a 73-residue protein sequence, read N- to C-terminus: Conotoxin Cl14.8 (73 aa).

Positions 1–19 (MKLSVTFIALMLTMTLTQG) are cleaved as a signal peptide. Positions 20–47 (FVLQAIDGRDNSGLDDLSEADSMEHQLQ) are excised as a propeptide.

It belongs to the conotoxin L superfamily. In terms of processing, contains 2 disulfide bonds. As to expression, expressed by the venom duct.

The protein localises to the secreted. This chain is Conotoxin Cl14.8, found in Californiconus californicus (California cone).